We begin with the raw amino-acid sequence, 382 residues long: tRNA (guanine(26)-N(2))-dimethyltransferase (382 aa).

The region spanning 4 to 373 (VEIIEGKARI…KNLDEIKECI (370 aa)) is the Trm1 methyltransferase domain. S-adenosyl-L-methionine is bound by residues Arg44, Arg69, and Asp87. Zn(2+) is bound by residues Cys246, Cys249, Cys263, and Cys266.

Belongs to the class I-like SAM-binding methyltransferase superfamily. Trm1 family.

It carries out the reaction guanosine(26) in tRNA + 2 S-adenosyl-L-methionine = N(2)-dimethylguanosine(26) in tRNA + 2 S-adenosyl-L-homocysteine + 2 H(+). Its function is as follows. Dimethylates a single guanine residue at position 26 of a number of tRNAs using S-adenosyl-L-methionine as donor of the methyl groups. In Sulfolobus acidocaldarius (strain ATCC 33909 / DSM 639 / JCM 8929 / NBRC 15157 / NCIMB 11770), this protein is tRNA (guanine(26)-N(2))-dimethyltransferase.